A 316-amino-acid chain; its full sequence is uncharacterized protein (316 aa).

The next 4 membrane-spanning stretches (helical) occupy residues 74-94, 99-119, 166-186, and 188-208; these read IPVL…GMAI, WPYA…IFLG, MAGC…TVLG, and VEGF…GYIF.

The protein localises to the cell membrane. This is an uncharacterized protein from Synechocystis sp. (strain ATCC 27184 / PCC 6803 / Kazusa).